Consider the following 720-residue polypeptide: Ornithine decarboxylase (720 aa).

N6-(pyridoxal phosphate)lysine is present on Lys354.

The protein belongs to the Orn/Lys/Arg decarboxylase class-I family. The cofactor is pyridoxal 5'-phosphate.

It catalyses the reaction L-ornithine + H(+) = putrescine + CO2. The polypeptide is Ornithine decarboxylase (speF) (Haemophilus influenzae (strain ATCC 51907 / DSM 11121 / KW20 / Rd)).